The following is a 367-amino-acid chain: Damage-control phosphatase At2g17340 (367 aa).

Met1 carries the post-translational modification N-acetylmethionine. Mn(2+) is bound by residues Asp220, Asn221, and Asp256. Positions 318–322 (EGMGR) match the Subfamily II EGMGR motif motif.

Belongs to the damage-control phosphatase family. Phosphopantetheine phosphatase II subfamily. In terms of assembly, multimer. It depends on Mn(2+) as a cofactor. The cofactor is Ni(2+).

With respect to regulation, activity is strongly promoted by Co(2+), Ni(2+), Mg(2+), Cu(2+) and Mn(2+). Activity is inhibited by EDTA. Its function is as follows. Metal-dependent phosphatase with probable damage-control functions. Shows phosphatase activity against several substrates, including sugar phosphates and p-nitrophenyl phosphate(pNPP). Prefers sugar phosphate substrates, including the extremely potent glycating agents ribose-5-phosphate and erythrose-4-phosphate. This Arabidopsis thaliana (Mouse-ear cress) protein is Damage-control phosphatase At2g17340.